The following is a 396-amino-acid chain: MTTNTVSRKVAWLRVVTLAVAAFIFNTTEFVPVGLLSDIAQSFHMQTAQVGIMLTIYAWVVALMSLPFMLMTSQVERRKLLICLFVVFIASHVLSFLSWSFTVLVISRIGVAFAHAIFWSITASLAIRMAPAGKRAQALSLIATGTALAMVLGLPLGRIVGQYFGWRMTFFAIGIGALITLLCLIKLLPLLPSEHSGSLKSLPLLFRRPALMSIYLLTVVVVTAHYTAYSYIEPFVQNIAGFSANFATALLLLLGGAGIIGSVIFGKLGNQYASALVSTAIALLLVCLALLLPAANSEIHLGVLSIFWGIAMMIIGLGMQVKVLALAPDATDVAMALFSGIFNIGIGAGALVGNQVSLHLSMSMIGYVGTVPAFAALIWSIIIFRRWPVTLEEQTQ.

The next 12 membrane-spanning stretches (helical) occupy residues 15–35 (VVTLAVAAFIFNTTEFVPVGL), 50–70 (VGIMLTIYAWVVALMSLPFML), 81–101 (LICLFVVFIASHVLSFLSWSF), 103–123 (VLVISRIGVAFAHAIFWSITA), 136–156 (AQALSLIATGTALAMVLGLPL), 170–190 (FFAIGIGALITLLCLIKLLPL), 209–229 (PALMSIYLLTVVVVTAHYTAY), 246–266 (FATALLLLLGGAGIIGSVIFG), 275–295 (ALVSTAIALLLVCLALLLPAA), 299–319 (IHLGVLSIFWGIAMMIIGLGM), 333–353 (VAMALFSGIFNIGIGAGALVG), and 364–384 (MIGYVGTVPAFAALIWSIIIF).

Belongs to the major facilitator superfamily. SotB (TC 2.A.1.2) family.

It is found in the cell inner membrane. Involved in the efflux of sugars. The physiological role may be the reduction of the intracellular concentration of toxic sugars or sugar metabolites. The polypeptide is Probable sugar efflux transporter (Escherichia coli O157:H7 (strain EC4115 / EHEC)).